A 704-amino-acid chain; its full sequence is Tetratricopeptide repeat protein 12 (704 aa).

Threonine 71 bears the Phosphothreonine mark. TPR repeat units lie at residues 105 to 138, 139 to 172, and 173 to 206; these read ADAL…LKDM, KVLY…DENC, and TKAY…NPKL.

It is found in the cytoplasm. In terms of biological role, cytoplasmic protein that plays a role in the proper assembly of dynein arm complexes in motile cilia in both respiratory cells and sperm flagella. In Mus musculus (Mouse), this protein is Tetratricopeptide repeat protein 12 (Ttc12).